The sequence spans 269 residues: Phosphonates import ATP-binding protein PhnC (269 aa).

Positions 8–251 (IHLYGASLRH…LLDALYANEQ (244 aa)) constitute an ABC transporter domain. 40 to 47 (GPSGAGKS) is an ATP binding site.

Belongs to the ABC transporter superfamily. Phosphonates importer (TC 3.A.1.9.1) family. The complex is composed of two ATP-binding proteins (PhnC), two transmembrane proteins (PhnE) and a solute-binding protein (PhnD).

The protein localises to the cell inner membrane. The enzyme catalyses phosphonate(out) + ATP + H2O = phosphonate(in) + ADP + phosphate + H(+). Part of the ABC transporter complex PhnCDE involved in phosphonates import. Responsible for energy coupling to the transport system. The chain is Phosphonates import ATP-binding protein PhnC from Pseudomonas putida (strain ATCC 47054 / DSM 6125 / CFBP 8728 / NCIMB 11950 / KT2440).